Consider the following 1166-residue polypeptide: DNA-directed RNA polymerase subunit beta (1166 aa).

It belongs to the RNA polymerase beta chain family. As to quaternary structure, the RNAP catalytic core consists of 2 alpha, 1 beta, 1 beta' and 1 omega subunit. When a sigma factor is associated with the core the holoenzyme is formed, which can initiate transcription.

The enzyme catalyses RNA(n) + a ribonucleoside 5'-triphosphate = RNA(n+1) + diphosphate. In terms of biological role, DNA-dependent RNA polymerase catalyzes the transcription of DNA into RNA using the four ribonucleoside triphosphates as substrates. In Nocardioides sp. (strain ATCC BAA-499 / JS614), this protein is DNA-directed RNA polymerase subunit beta.